A 33-amino-acid polypeptide reads, in one-letter code: Cytochrome b6-f complex subunit 8 (33 aa).

The helical transmembrane segment at 2–22 (LFTLAWASLAAVFSFSIAMVV) threads the bilayer.

This sequence belongs to the PetN family. The 4 large subunits of the cytochrome b6-f complex are cytochrome b6, subunit IV (17 kDa polypeptide, PetD), cytochrome f and the Rieske protein, while the 4 small subunits are PetG, PetL, PetM and PetN. The complex functions as a dimer.

Its subcellular location is the cellular thylakoid membrane. Functionally, component of the cytochrome b6-f complex, which mediates electron transfer between photosystem II (PSII) and photosystem I (PSI), cyclic electron flow around PSI, and state transitions. The chain is Cytochrome b6-f complex subunit 8 from Synechococcus sp. (strain WH7803).